Reading from the N-terminus, the 162-residue chain is Interleukin-15 (162 aa).

The N-terminal stretch at 1 to 29 (MRISKPHLRSISIQCYLCLLLNSHFLTEA) is a signal peptide. The propeptide occupies 30–48 (GIHVFILGCFSAGLPKTEA). Intrachain disulfides connect C83–C133 and C90–C136. N127 carries N-linked (GlcNAc...) asparagine glycosylation.

The protein belongs to the IL-15/IL-21 family. Most abundant in placenta and skeletal muscle. It is also detected in the heart, lung, liver and kidney. IL15-S21AA is preferentially expressed in tissues such as testis and thymus.

Its subcellular location is the secreted. The protein localises to the cytoplasm. It localises to the nucleus. Cytokine that plays a major role in the development of inflammatory and protective immune responses to microbial invaders and parasites by modulating immune cells of both the innate and adaptive immune systems. Stimulates the proliferation of natural killer cells, T-cells and B-cells and promotes the secretion of several cytokines. In monocytes, induces the production of IL8 and monocyte chemotactic protein 1/CCL2, two chemokines that attract neutrophils and monocytes respectively to sites of infection. Unlike most cytokines, which are secreted in soluble form, IL15 is expressed in association with its high affinity IL15RA on the surface of IL15-producing cells and delivers signals to target cells that express IL2RB and IL2RG receptor subunits. Binding to its receptor triggers the phosphorylation of JAK1 and JAK3 and the recruitment and subsequent phosphorylation of signal transducer and activator of transcription-3/STAT3 and STAT5. In mast cells, induces the rapid tyrosine phosphorylation of STAT6 and thereby controls mast cell survival and release of cytokines such as IL4. This Homo sapiens (Human) protein is Interleukin-15 (IL15).